The primary structure comprises 439 residues: ATP-dependent RNA helicase SrmB (439 aa).

Residues 4-32 carry the Q motif motif; the sequence is SQFEQFDLSPELLKALEKKGYSRPTAIQM. A Helicase ATP-binding domain is found at 35 to 209; sequence IPAAMEESDV…AERLLNDPVK (175 aa). 48–55 contacts ATP; the sequence is APTGTGKT. The short motif at 157-160 is the DEAD box element; that stretch reads DEAD. The Helicase C-terminal domain occupies 237–387; it reads KLLARFIETE…GLEPRTKPPK (151 aa). A compositionally biased stretch (basic and acidic residues) spans 381–393; the sequence is PRTKPPKDGEVKS. A disordered region spans residues 381-439; that stretch reads PRTKPPKDGEVKSVSKKQKARIKEKREEKKKTEAKKKVKLRHKDTKNIGKRRKPSNSNV. 2 stretches are compositionally biased toward basic residues: residues 394-403 and 412-439; these read VSKKQKARIK and TEAKKKVKLRHKDTKNIGKRRKPSNSNV.

Belongs to the DEAD box helicase family. SrmB subfamily. As to quaternary structure, interacts with the 50S ribosomal subunit.

The protein localises to the cytoplasm. The enzyme catalyses ATP + H2O = ADP + phosphate + H(+). DEAD-box RNA helicase involved in the assembly of the 50S ribosomal subunit at low temperature. Exhibits RNA-stimulated ATP hydrolysis and RNA unwinding activity. The chain is ATP-dependent RNA helicase SrmB from Haemophilus influenzae (strain ATCC 51907 / DSM 11121 / KW20 / Rd).